A 420-amino-acid chain; its full sequence is Glucose-1-phosphate adenylyltransferase (420 aa).

Alpha-D-glucose 1-phosphate-binding positions include Tyr-108, Gly-173, 188–189 (EK), and Ser-206.

It belongs to the bacterial/plant glucose-1-phosphate adenylyltransferase family. Homotetramer.

The enzyme catalyses alpha-D-glucose 1-phosphate + ATP + H(+) = ADP-alpha-D-glucose + diphosphate. Its pathway is glycan biosynthesis; glycogen biosynthesis. In terms of biological role, involved in the biosynthesis of ADP-glucose, a building block required for the elongation reactions to produce glycogen. Catalyzes the reaction between ATP and alpha-D-glucose 1-phosphate (G1P) to produce pyrophosphate and ADP-Glc. This Paraburkholderia phytofirmans (strain DSM 17436 / LMG 22146 / PsJN) (Burkholderia phytofirmans) protein is Glucose-1-phosphate adenylyltransferase.